We begin with the raw amino-acid sequence, 943 residues long: Protein translocase subunit SecA (943 aa).

Residues Gln90, 108–112 (GEGKT), and Asp509 contribute to the ATP site. The tract at residues 534-561 (KPDNEHKPPIPQQRNSKSGGGFSANVDS) is disordered.

The protein belongs to the SecA family. In terms of assembly, monomer and homodimer. Part of the essential Sec protein translocation apparatus which comprises SecA, SecYEG and auxiliary proteins SecDF. Other proteins may also be involved.

It localises to the cell inner membrane. The protein resides in the cellular thylakoid membrane. It is found in the cytoplasm. The enzyme catalyses ATP + H2O + cellular proteinSide 1 = ADP + phosphate + cellular proteinSide 2.. Part of the Sec protein translocase complex. Interacts with the SecYEG preprotein conducting channel. Has a central role in coupling the hydrolysis of ATP to the transfer of proteins into and across the cell membrane, serving as an ATP-driven molecular motor driving the stepwise translocation of polypeptide chains across the membrane. Its function is as follows. Probably participates in protein translocation into and across both the cytoplasmic and thylakoid membranes in cyanobacterial cells. This chain is Protein translocase subunit SecA, found in Prochlorococcus marinus subsp. pastoris (strain CCMP1986 / NIES-2087 / MED4).